The sequence spans 1057 residues: Carbamoyl phosphate synthase large chain (1057 aa).

The interval 1-401 is carboxyphosphate synthetic domain; sequence MPKRDDIKTI…SLLKAIRSLE (401 aa). R129, R169, G175, G176, K208, I210, E215, G241, I242, H243, Q284, and E298 together coordinate ATP. The ATP-grasp 1 domain maps to 133-327; that stretch reads RTLMNDLNVP…IAKLAAKIAV (195 aa). Q284, E298, and N300 together coordinate Mg(2+). 3 residues coordinate Mn(2+): Q284, E298, and N300. Residues 402–546 are oligomerization domain; that stretch reads YGVHHLGLSN…YGTYEYENES (145 aa). The carbamoyl phosphate synthetic domain stretch occupies residues 547–929; that stretch reads IVTDKEKILV…ALYKGLTGSG (383 aa). An ATP-grasp 2 domain is found at 671–861; that stretch reads EALLREIAVP…MAQLAMRAIM (191 aa). The ATP site is built by R707, R746, L748, E752, G777, V778, H779, S780, Q820, and E832. Positions 820, 832, and 834 each coordinate Mg(2+). 3 residues coordinate Mn(2+): Q820, E832, and N834. Residues 930–1057 enclose the MGS-like domain; that stretch reads FEVKDHGTVL…ESMTFTMRNV (128 aa). An allosteric domain region spans residues 930–1057; that stretch reads FEVKDHGTVL…ESMTFTMRNV (128 aa).

This sequence belongs to the CarB family. Composed of two chains; the small (or glutamine) chain promotes the hydrolysis of glutamine to ammonia, which is used by the large (or ammonia) chain to synthesize carbamoyl phosphate. Tetramer of heterodimers (alpha,beta)4. The cofactor is Mg(2+). Requires Mn(2+) as cofactor.

It carries out the reaction hydrogencarbonate + L-glutamine + 2 ATP + H2O = carbamoyl phosphate + L-glutamate + 2 ADP + phosphate + 2 H(+). It catalyses the reaction hydrogencarbonate + NH4(+) + 2 ATP = carbamoyl phosphate + 2 ADP + phosphate + 2 H(+). It participates in amino-acid biosynthesis; L-arginine biosynthesis; carbamoyl phosphate from bicarbonate: step 1/1. The protein operates within pyrimidine metabolism; UMP biosynthesis via de novo pathway; (S)-dihydroorotate from bicarbonate: step 1/3. In terms of biological role, large subunit of the glutamine-dependent carbamoyl phosphate synthetase (CPSase). CPSase catalyzes the formation of carbamoyl phosphate from the ammonia moiety of glutamine, carbonate, and phosphate donated by ATP, constituting the first step of 2 biosynthetic pathways, one leading to arginine and/or urea and the other to pyrimidine nucleotides. The large subunit (synthetase) binds the substrates ammonia (free or transferred from glutamine from the small subunit), hydrogencarbonate and ATP and carries out an ATP-coupled ligase reaction, activating hydrogencarbonate by forming carboxy phosphate which reacts with ammonia to form carbamoyl phosphate. This is Carbamoyl phosphate synthase large chain from Staphylococcus epidermidis (strain ATCC 12228 / FDA PCI 1200).